The sequence spans 267 residues: Thiamine thiazole synthase (267 aa).

Residues S47, 66–67, G74, V138, and 164–166 each bind NAD(+); these read ER and HID. D166 and H181 together coordinate Fe cation. The NAD(+) site is built by S184 and M230. R240 provides a ligand contact to glycine.

The protein belongs to the THI4 family. In terms of assembly, homooctamer; tetramer of dimers. It depends on Fe(2+) as a cofactor.

The catalysed reaction is hydrogen sulfide + glycine + NAD(+) = ADP-5-ethyl-4-methylthiazole-2-carboxylate + nicotinamide + 3 H2O + H(+). Its pathway is cofactor biosynthesis; thiamine diphosphate biosynthesis. Its function is as follows. Involved in the biosynthesis of the thiazole moiety of thiamine. Catalyzes the conversion of NAD and glycine to adenosine diphosphate 5-(2-hydroxyethyl)-4-methylthiazole-2-carboxylate (ADT), an adenylated thiazole intermediate, using free sulfide as a source of sulfur. The polypeptide is Thiamine thiazole synthase (Methanocaldococcus jannaschii (strain ATCC 43067 / DSM 2661 / JAL-1 / JCM 10045 / NBRC 100440) (Methanococcus jannaschii)).